The chain runs to 429 residues: UDP-N-acetylglucosamine 1-carboxyvinyltransferase (429 aa).

22–23 (KN) is a phosphoenolpyruvate binding site. Residue Arg102 coordinates UDP-N-acetyl-alpha-D-glucosamine. Catalysis depends on Cys126, which acts as the Proton donor. Residue Cys126 is modified to 2-(S-cysteinyl)pyruvic acid O-phosphothioketal. Residues 131-135 (RPVDL), Asp316, and Ile338 contribute to the UDP-N-acetyl-alpha-D-glucosamine site.

This sequence belongs to the EPSP synthase family. MurA subfamily.

The protein resides in the cytoplasm. It catalyses the reaction phosphoenolpyruvate + UDP-N-acetyl-alpha-D-glucosamine = UDP-N-acetyl-3-O-(1-carboxyvinyl)-alpha-D-glucosamine + phosphate. It functions in the pathway cell wall biogenesis; peptidoglycan biosynthesis. In terms of biological role, cell wall formation. Adds enolpyruvyl to UDP-N-acetylglucosamine. This chain is UDP-N-acetylglucosamine 1-carboxyvinyltransferase, found in Rhodopseudomonas palustris (strain TIE-1).